We begin with the raw amino-acid sequence, 351 residues long: Anthranilate phosphoribosyltransferase (351 aa).

Residues Gly-89, 92-93 (GD), Thr-97, 99-102 (NIST), 117-125 (KHGNRSASG), and Ser-129 contribute to the 5-phospho-alpha-D-ribose 1-diphosphate site. Gly-89 contacts anthranilate. Ser-101 is a binding site for Mg(2+). Asn-120 lines the anthranilate pocket. Arg-175 contacts anthranilate. Asp-234 and Glu-235 together coordinate Mg(2+).

The protein belongs to the anthranilate phosphoribosyltransferase family. In terms of assembly, homodimer. It depends on Mg(2+) as a cofactor.

It carries out the reaction N-(5-phospho-beta-D-ribosyl)anthranilate + diphosphate = 5-phospho-alpha-D-ribose 1-diphosphate + anthranilate. The protein operates within amino-acid biosynthesis; L-tryptophan biosynthesis; L-tryptophan from chorismate: step 2/5. Functionally, catalyzes the transfer of the phosphoribosyl group of 5-phosphorylribose-1-pyrophosphate (PRPP) to anthranilate to yield N-(5'-phosphoribosyl)-anthranilate (PRA). This is Anthranilate phosphoribosyltransferase from Synechococcus sp. (strain CC9902).